We begin with the raw amino-acid sequence, 250 residues long: Imidazole glycerol phosphate synthase subunit HisF (250 aa).

Active-site residues include D11 and D130.

This sequence belongs to the HisA/HisF family. As to quaternary structure, heterodimer of HisH and HisF.

It localises to the cytoplasm. It carries out the reaction 5-[(5-phospho-1-deoxy-D-ribulos-1-ylimino)methylamino]-1-(5-phospho-beta-D-ribosyl)imidazole-4-carboxamide + L-glutamine = D-erythro-1-(imidazol-4-yl)glycerol 3-phosphate + 5-amino-1-(5-phospho-beta-D-ribosyl)imidazole-4-carboxamide + L-glutamate + H(+). It participates in amino-acid biosynthesis; L-histidine biosynthesis; L-histidine from 5-phospho-alpha-D-ribose 1-diphosphate: step 5/9. In terms of biological role, IGPS catalyzes the conversion of PRFAR and glutamine to IGP, AICAR and glutamate. The HisF subunit catalyzes the cyclization activity that produces IGP and AICAR from PRFAR using the ammonia provided by the HisH subunit. This is Imidazole glycerol phosphate synthase subunit HisF from Elusimicrobium minutum (strain Pei191).